We begin with the raw amino-acid sequence, 876 residues long: Leucine--tRNA ligase (876 aa).

Positions 42 to 52 (PYPSGKLHMGH) match the 'HIGH' region motif. Positions 634-638 (KMSKS) match the 'KMSKS' region motif. Residue lysine 637 coordinates ATP.

It belongs to the class-I aminoacyl-tRNA synthetase family.

It localises to the cytoplasm. It carries out the reaction tRNA(Leu) + L-leucine + ATP = L-leucyl-tRNA(Leu) + AMP + diphosphate. The polypeptide is Leucine--tRNA ligase (Neisseria gonorrhoeae (strain ATCC 700825 / FA 1090)).